The chain runs to 622 residues: Chaperone protein HscA homolog (622 aa).

Belongs to the heat shock protein 70 family.

Chaperone involved in the maturation of iron-sulfur cluster-containing proteins. Has a low intrinsic ATPase activity which is markedly stimulated by HscB. The chain is Chaperone protein HscA homolog from Burkholderia pseudomallei (strain K96243).